Here is a 243-residue protein sequence, read N- to C-terminus: MEVGRYLKEGLLISLQQRLREFAEGIRKPTSSLKVHRQIVSLLEKPDPVILDIGCNDGSDARRFLQLRPKAQLFCFEPDPRAAARCRENMGPLDRMRLFEVAISDRNGRIDFHPSNGDGDAKEWDLSGSIRQPKNHLSEYQWVRFDGPISVETRRLDDWCSEAGLESIDLIWMDVQGAESDVIAGGKETLTKTRFIYTEYSDQELYEGQLPLRAILDLLPSFELVAQFPRGVEGDVLLRNTKL.

It belongs to the FkbM methyltransferase family.

It is found in the cytoplasm. Functionally, required for 2-O-methylation of the fucosyl group of Nod factors. This is 2-O-methyltransferase NoeI (noeI) from Sinorhizobium fredii (strain NBRC 101917 / NGR234).